A 183-amino-acid chain; its full sequence is Oleosin 5 (183 aa).

A polar region spans residues 1–39; sequence MADVRTHSHQLQVHPQRQHEGGIKVLYPQSGPSSTQVLA. 3 helical membrane-spanning segments follow: residues 37–57, 66–86, and 87–107; these read VLAVFVGVPIGGTLLTIAGLT, MLAFPLFLIFSPVIVPAAFVI, and GLAMTGFLASGAIGLTGLSSM. Residues 40–113 form a hydrophobic region; sequence VFVGVPIGGT…LSSMSWVLNY (74 aa). The tract at residues 144–183 is disordered; that stretch reads KDAGQTIEDKAHDVREAKTFDVRDRDTTKGTHNVRDTKTT.

The protein belongs to the oleosin family.

It localises to the lipid droplet. The protein localises to the membrane. In terms of biological role, may have a structural role to stabilize the lipid body during desiccation of the seed by preventing coalescence of the oil. Probably interacts with both lipid and phospholipid moieties of lipid bodies. May also provide recognition signals for specific lipase anchorage in lipolysis during seedling growth. In Arabidopsis thaliana (Mouse-ear cress), this protein is Oleosin 5.